A 162-amino-acid polypeptide reads, in one-letter code: Caveolin-2 (162 aa).

At 1-86 the chain is on the cytoplasmic side; that stretch reads MGLETEKADV…FEISKYVIYK (86 aa). Tyr-19 carries the phosphotyrosine; by SRC modification. 2 positions are modified to phosphoserine: Ser-20 and Ser-23. Tyr-27 is subject to Phosphotyrosine; by SRC. Ser-36 is subject to Phosphoserine. The segment at residues 87–107 is an intramembrane region (helical); the sequence is FLTVFLAIPLAFTAGILFATL. At 108–162 the chain is on the cytoplasmic side; sequence SCLHIWIIMPFVKTCLMVLPSVQTIWRSVTDVIIAPLCTSIGRICSSVSLQVSHD.

The protein belongs to the caveolin family. Monomer or homodimer. Interacts with CAV1; the interaction forms a stable heterooligomeric complex that is required for targeting to lipid rafts and for caveolae formation. Tyrosine phosphorylated forms do not form heterooligomers with the Tyr-19-phosphorylated form existing as a monomer or dimer, and the Tyr-27-form as a monomer only. Interacts (tyrosine phosphorylated form) with the SH2 domain-containing proteins, RASA1, NCK1 and SRC. Interacts (tyrosine phosphorylated form) with INSR, the interaction (Tyr-27-phosphorylated form) is increased on insulin stimulation. Interacts (Tyr-19 phosphorylated form) with MAPK1 (phosphorylated form); the interaction, promoted by insulin, leads to nuclear location and MAPK1 activation. Interacts with STAT3; the interaction is increased on insulin-induced tyrosine phosphorylation leading to STAT activation. Phosphorylated on serine and tyrosine residues. CAV1 promotes phosphorylation on Ser-23 which then targets the complex to the plasma membrane, lipid rafts and caveolae. Phosphorylation on Ser-36 appears to modulate mitosis in endothelial cells. Phosphorylation on both Tyr-19 and Tyr-27 is required for insulin-induced 'Ser-727' phosphorylation of STAT3 and its activation. Phosphorylation on Tyr-19 is required for insulin-induced phosphorylation of MAPK1 and DNA binding of STAT3. Tyrosine phosphorylation is induced by both EGF and insulin (By. similarity).

The protein localises to the nucleus. The protein resides in the cytoplasm. It is found in the golgi apparatus membrane. Its subcellular location is the cell membrane. It localises to the membrane. The protein localises to the caveola. Its function is as follows. May act as a scaffolding protein within caveolar membranes. Interacts directly with G-protein alpha subunits and can functionally regulate their activity. Acts as an accessory protein in conjunction with CAV1 in targeting to lipid rafts and driving caveolae formation. The Ser-36 phosphorylated form has a role in modulating mitosis in endothelial cells. Positive regulator of cellular mitogenesis of the MAPK signaling pathway. Required for the insulin-stimulated nuclear translocation and activation of MAPK1 and STAT3, and the subsequent regulation of cell cycle progression. The polypeptide is Caveolin-2 (CAV2) (Atelerix albiventris (Middle-African hedgehog)).